Consider the following 150-residue polypeptide: D-aminoacyl-tRNA deacylase (150 aa).

Residues 138–139 carry the Gly-cisPro motif, important for rejection of L-amino acids motif; it reads GP.

It belongs to the DTD family. Homodimer.

The protein localises to the cytoplasm. It carries out the reaction glycyl-tRNA(Ala) + H2O = tRNA(Ala) + glycine + H(+). It catalyses the reaction a D-aminoacyl-tRNA + H2O = a tRNA + a D-alpha-amino acid + H(+). Its function is as follows. An aminoacyl-tRNA editing enzyme that deacylates mischarged D-aminoacyl-tRNAs. Also deacylates mischarged glycyl-tRNA(Ala), protecting cells against glycine mischarging by AlaRS. Acts via tRNA-based rather than protein-based catalysis; rejects L-amino acids rather than detecting D-amino acids in the active site. By recycling D-aminoacyl-tRNA to D-amino acids and free tRNA molecules, this enzyme counteracts the toxicity associated with the formation of D-aminoacyl-tRNA entities in vivo and helps enforce protein L-homochirality. In Chlorobaculum tepidum (strain ATCC 49652 / DSM 12025 / NBRC 103806 / TLS) (Chlorobium tepidum), this protein is D-aminoacyl-tRNA deacylase.